The chain runs to 196 residues: Peptidyl-tRNA hydrolase (196 aa).

Residue histidine 15 participates in tRNA binding. Histidine 20 (proton acceptor) is an active-site residue. 3 residues coordinate tRNA: tyrosine 66, asparagine 68, and asparagine 114.

It belongs to the PTH family. As to quaternary structure, monomer.

It localises to the cytoplasm. It catalyses the reaction an N-acyl-L-alpha-aminoacyl-tRNA + H2O = an N-acyl-L-amino acid + a tRNA + H(+). Hydrolyzes ribosome-free peptidyl-tRNAs (with 1 or more amino acids incorporated), which drop off the ribosome during protein synthesis, or as a result of ribosome stalling. Its function is as follows. Catalyzes the release of premature peptidyl moieties from peptidyl-tRNA molecules trapped in stalled 50S ribosomal subunits, and thus maintains levels of free tRNAs and 50S ribosomes. The chain is Peptidyl-tRNA hydrolase from Polynucleobacter asymbioticus (strain DSM 18221 / CIP 109841 / QLW-P1DMWA-1) (Polynucleobacter necessarius subsp. asymbioticus).